The following is a 21-amino-acid chain: Preblooming protein 2 (21 aa).

Functionally, possible mediator for cell division in the blooming process. This Prorocentrum triestinum (Red tide alga) protein is Preblooming protein 2.